A 256-amino-acid polypeptide reads, in one-letter code: uncharacterized protein (256 aa).

Belongs to the methyltransferase superfamily.

Its subcellular location is the cytoplasm. It localises to the nucleus. Probable methyltransferase. This is an uncharacterized protein from Schizosaccharomyces pombe (strain 972 / ATCC 24843) (Fission yeast).